A 472-amino-acid polypeptide reads, in one-letter code: Cysteine--tRNA ligase (472 aa).

A Zn(2+)-binding site is contributed by Cys-29. The short motif at 31 to 41 (PTVYDFAHIGN) is the 'HIGH' region element. Positions 227, 252, and 256 each coordinate Zn(2+). Positions 285-289 (KMSKS) match the 'KMSKS' region motif. Lys-288 provides a ligand contact to ATP.

Belongs to the class-I aminoacyl-tRNA synthetase family. Monomer. Requires Zn(2+) as cofactor.

It localises to the cytoplasm. The catalysed reaction is tRNA(Cys) + L-cysteine + ATP = L-cysteinyl-tRNA(Cys) + AMP + diphosphate. The polypeptide is Cysteine--tRNA ligase (Bradyrhizobium sp. (strain BTAi1 / ATCC BAA-1182)).